Here is a 207-residue protein sequence, read N- to C-terminus: GTP-binding protein Rheb homolog 1 (207 aa).

Positions 25, 26, 27, 42, 45, 126, 129, and 157 each coordinate GTP. S27 lines the Mg(2+) pocket. The Effector region signature appears at 42-50; the sequence is YESTIEDQH. Position 45 (T45) interacts with Mg(2+). Residues 180 to 193 are compositionally biased toward polar residues; sequence NLSPTERPNGNSPK. Residues 180 to 207 form a disordered region; that stretch reads NLSPTERPNGNSPKRNPFKDDGKPCSIS. A compositionally biased stretch (basic and acidic residues) spans 196-207; it reads PFKDDGKPCSIS. Cysteine methyl ester is present on C204. C204 carries the S-farnesyl cysteine lipid modification. A propeptide spans 205 to 207 (removed in mature form); it reads SIS.

The protein belongs to the small GTPase superfamily. Rheb family.

The protein resides in the cell membrane. It catalyses the reaction GTP + H2O = GDP + phosphate + H(+). Functionally, binds GTP and exhibits intrinsic GTPase activity. The protein is GTP-binding protein Rheb homolog 1 (rheb-1) of Caenorhabditis elegans.